A 545-amino-acid polypeptide reads, in one-letter code: CTP synthase (545 aa).

The segment at 1–264 (MQYIVVTGGV…ITRLSKLLNM (264 aa)) is amidoligase domain. Ser-12 contacts CTP. Ser-12 lines the UTP pocket. 13-18 (GLGKGT) contacts ATP. Position 53 (Tyr-53) interacts with L-glutamine. Asp-70 provides a ligand contact to ATP. Asp-70 and Glu-140 together coordinate Mg(2+). CTP contacts are provided by residues 147–149 (DIE), 185–190 (KTKPTQ), and Arg-221. Residues 185–190 (KTKPTQ) and Arg-221 contribute to the UTP site. Positions 294-527 (YVDLHDAYIS…VEQALIFKHR (234 aa)) constitute a Glutamine amidotransferase type-1 domain. Gly-347 is an L-glutamine binding site. The active-site Nucleophile; for glutamine hydrolysis is Cys-374. L-glutamine is bound by residues 375–378 (LGFQ), Glu-398, and Arg-455. Catalysis depends on residues His-500 and Glu-502.

The protein belongs to the CTP synthase family. Homotetramer.

It catalyses the reaction UTP + L-glutamine + ATP + H2O = CTP + L-glutamate + ADP + phosphate + 2 H(+). It carries out the reaction L-glutamine + H2O = L-glutamate + NH4(+). The enzyme catalyses UTP + NH4(+) + ATP = CTP + ADP + phosphate + 2 H(+). It participates in pyrimidine metabolism; CTP biosynthesis via de novo pathway; CTP from UDP: step 2/2. With respect to regulation, allosterically activated by GTP, when glutamine is the substrate; GTP has no effect on the reaction when ammonia is the substrate. The allosteric effector GTP functions by stabilizing the protein conformation that binds the tetrahedral intermediate(s) formed during glutamine hydrolysis. Inhibited by the product CTP, via allosteric rather than competitive inhibition. Catalyzes the ATP-dependent amination of UTP to CTP with either L-glutamine or ammonia as the source of nitrogen. Regulates intracellular CTP levels through interactions with the four ribonucleotide triphosphates. The polypeptide is CTP synthase (Thermoplasma acidophilum (strain ATCC 25905 / DSM 1728 / JCM 9062 / NBRC 15155 / AMRC-C165)).